We begin with the raw amino-acid sequence, 282 residues long: MHIVHSIAELREKLAPFQRPAFVPTMGNLHDGHIALVKQAKPLGDVTVSSIFVNRLQFAPHEDFDSYPRTLDADAQRLEAAGCNVLFAPREKELYPEPQTYKIHPATDLGDILEGHFRPGFFIGVSTVVLKLFSCVYAGKPSGVAAFGKKDYQQVLVVRRMVQQFALPIEILAGETQRAADGLALSSRNSYLSPNERIEAAQLSKALKALGDAARATPTPDLLALEAQAMQALARRGWKPDYLTVRRRADLQPPQGPLASEPLVVLGAAKLGNTRLIDNLEI.

ATP is bound at residue Met-26–His-33. His-33 (proton donor) is an active-site residue. Gln-57 lines the (R)-pantoate pocket. Gln-57 is a binding site for beta-alanine. ATP is bound at residue Gly-148 to Asp-151. Gln-154 is a (R)-pantoate binding site. Leu-185–Arg-188 lines the ATP pocket.

It belongs to the pantothenate synthetase family. In terms of assembly, homodimer.

Its subcellular location is the cytoplasm. The enzyme catalyses (R)-pantoate + beta-alanine + ATP = (R)-pantothenate + AMP + diphosphate + H(+). It functions in the pathway cofactor biosynthesis; (R)-pantothenate biosynthesis; (R)-pantothenate from (R)-pantoate and beta-alanine: step 1/1. Its function is as follows. Catalyzes the condensation of pantoate with beta-alanine in an ATP-dependent reaction via a pantoyl-adenylate intermediate. The polypeptide is Pantothenate synthetase (Polaromonas sp. (strain JS666 / ATCC BAA-500)).